Consider the following 360-residue polypeptide: Peptide chain release factor 1 (360 aa).

The residue at position 235 (glutamine 235) is an N5-methylglutamine. Positions 285-305 (KRQEAEASERRNLLGSGDRSD) are disordered.

It belongs to the prokaryotic/mitochondrial release factor family. In terms of processing, methylated by PrmC. Methylation increases the termination efficiency of RF1.

The protein localises to the cytoplasm. Peptide chain release factor 1 directs the termination of translation in response to the peptide chain termination codons UAG and UAA. The protein is Peptide chain release factor 1 of Proteus mirabilis (strain HI4320).